A 121-amino-acid polypeptide reads, in one-letter code: UPF0738 protein BLi01253/BL05110 (121 aa).

This sequence belongs to the UPF0738 family.

The protein is UPF0738 protein BLi01253/BL05110 of Bacillus licheniformis (strain ATCC 14580 / DSM 13 / JCM 2505 / CCUG 7422 / NBRC 12200 / NCIMB 9375 / NCTC 10341 / NRRL NRS-1264 / Gibson 46).